The following is a 1071-amino-acid chain: ATP-dependent helicase/deoxyribonuclease subunit B (1071 aa).

The protein belongs to the helicase family. AddB/RexB type 2 subfamily. Heterodimer of AddA and RexB. The cofactor is Mg(2+).

Functionally, the heterodimer acts as both an ATP-dependent DNA helicase and an ATP-dependent, dual-direction single-stranded exonuclease. Recognizes the chi site generating a DNA molecule suitable for the initiation of homologous recombination. This subunit has 5' -&gt; 3' nuclease activity but not helicase activity. This is ATP-dependent helicase/deoxyribonuclease subunit B from Streptococcus pyogenes serotype M3 (strain ATCC BAA-595 / MGAS315).